The sequence spans 378 residues: UDP-N-acetylglucosamine--N-acetylmuramyl-(pentapeptide) pyrophosphoryl-undecaprenol N-acetylglucosamine transferase (378 aa).

Residues 24–26, N144, R181, S215, and Q310 each bind UDP-N-acetyl-alpha-D-glucosamine; that span reads TAG.

Belongs to the glycosyltransferase 28 family. MurG subfamily.

The protein localises to the cell membrane. The catalysed reaction is di-trans,octa-cis-undecaprenyl diphospho-N-acetyl-alpha-D-muramoyl-L-alanyl-D-glutamyl-meso-2,6-diaminopimeloyl-D-alanyl-D-alanine + UDP-N-acetyl-alpha-D-glucosamine = di-trans,octa-cis-undecaprenyl diphospho-[N-acetyl-alpha-D-glucosaminyl-(1-&gt;4)]-N-acetyl-alpha-D-muramoyl-L-alanyl-D-glutamyl-meso-2,6-diaminopimeloyl-D-alanyl-D-alanine + UDP + H(+). Its pathway is cell wall biogenesis; peptidoglycan biosynthesis. Its function is as follows. Cell wall formation. Catalyzes the transfer of a GlcNAc subunit on undecaprenyl-pyrophosphoryl-MurNAc-pentapeptide (lipid intermediate I) to form undecaprenyl-pyrophosphoryl-MurNAc-(pentapeptide)GlcNAc (lipid intermediate II). The polypeptide is UDP-N-acetylglucosamine--N-acetylmuramyl-(pentapeptide) pyrophosphoryl-undecaprenol N-acetylglucosamine transferase (Nocardia farcinica (strain IFM 10152)).